Consider the following 442-residue polypeptide: Transposase InsG for insertion sequence element IS4 (442 aa).

Belongs to the transposase 11 family.

Functionally, involved in the transposition of the insertion sequence IS4. This chain is Transposase InsG for insertion sequence element IS4 (insG), found in Escherichia coli (strain K12).